Reading from the N-terminus, the 579-residue chain is Adenine deaminase (579 aa).

Belongs to the metallo-dependent hydrolases superfamily. Adenine deaminase family. Requires Mn(2+) as cofactor.

It catalyses the reaction adenine + H2O + H(+) = hypoxanthine + NH4(+). This Listeria innocua serovar 6a (strain ATCC BAA-680 / CLIP 11262) protein is Adenine deaminase.